The primary structure comprises 663 residues: UvrABC system protein B (663 aa).

The 241-residue stretch at 31–271 (DNIEGGEKAQ…EASIAKIQAE (241 aa)) folds into the Helicase ATP-binding domain. 44–51 (GATGTGKT) contacts ATP. Residues 97 to 120 (YYDYYQPEAYVPSSDTYIEKDSSV) carry the Beta-hairpin motif. Residues 435–601 (QMDDLLGEIN…TIKKEIRDLI (167 aa)) enclose the Helicase C-terminal domain. The UVR domain occupies 627 to 662 (QEAIKKLQKQMHEAAELLDFELAAQIRDMVLELKSM).

This sequence belongs to the UvrB family. Forms a heterotetramer with UvrA during the search for lesions. Interacts with UvrC in an incision complex.

The protein localises to the cytoplasm. In terms of biological role, the UvrABC repair system catalyzes the recognition and processing of DNA lesions. A damage recognition complex composed of 2 UvrA and 2 UvrB subunits scans DNA for abnormalities. Upon binding of the UvrA(2)B(2) complex to a putative damaged site, the DNA wraps around one UvrB monomer. DNA wrap is dependent on ATP binding by UvrB and probably causes local melting of the DNA helix, facilitating insertion of UvrB beta-hairpin between the DNA strands. Then UvrB probes one DNA strand for the presence of a lesion. If a lesion is found the UvrA subunits dissociate and the UvrB-DNA preincision complex is formed. This complex is subsequently bound by UvrC and the second UvrB is released. If no lesion is found, the DNA wraps around the other UvrB subunit that will check the other stand for damage. This is UvrABC system protein B from Streptococcus uberis (strain ATCC BAA-854 / 0140J).